Reading from the N-terminus, the 72-residue chain is Protein SlyX homolog (72 aa).

The interval 53-72 (KDISPSNIRREEEETPPPHY) is disordered.

It belongs to the SlyX family.

This chain is Protein SlyX homolog, found in Marinobacter nauticus (strain ATCC 700491 / DSM 11845 / VT8) (Marinobacter aquaeolei).